A 351-amino-acid chain; its full sequence is UDP-3-O-acylglucosamine N-acyltransferase (351 aa).

His240 acts as the Proton acceptor in catalysis.

Belongs to the transferase hexapeptide repeat family. LpxD subfamily. In terms of assembly, homotrimer.

The enzyme catalyses a UDP-3-O-[(3R)-3-hydroxyacyl]-alpha-D-glucosamine + a (3R)-hydroxyacyl-[ACP] = a UDP-2-N,3-O-bis[(3R)-3-hydroxyacyl]-alpha-D-glucosamine + holo-[ACP] + H(+). It participates in bacterial outer membrane biogenesis; LPS lipid A biosynthesis. Its function is as follows. Catalyzes the N-acylation of UDP-3-O-acylglucosamine using 3-hydroxyacyl-ACP as the acyl donor. Is involved in the biosynthesis of lipid A, a phosphorylated glycolipid that anchors the lipopolysaccharide to the outer membrane of the cell. This is UDP-3-O-acylglucosamine N-acyltransferase from Ectopseudomonas mendocina (strain ymp) (Pseudomonas mendocina).